We begin with the raw amino-acid sequence, 517 residues long: Crotonobetaine/carnitine--CoA ligase (517 aa).

The protein belongs to the ATP-dependent AMP-binding enzyme family.

It catalyses the reaction 4-(trimethylamino)butanoate + ATP + CoA = 4-(trimethylamino)butanoyl-CoA + AMP + diphosphate. The catalysed reaction is crotonobetaine + ATP + CoA = crotonobetainyl-CoA + AMP + diphosphate. It carries out the reaction (R)-carnitine + ATP + CoA = (R)-carnitinyl-CoA + AMP + diphosphate. It functions in the pathway amine and polyamine metabolism; carnitine metabolism. Its function is as follows. Catalyzes the transfer of CoA to carnitine, generating the initial carnitinyl-CoA needed for the CaiB reaction cycle. Also has activity toward crotonobetaine and gamma-butyrobetaine. The sequence is that of Crotonobetaine/carnitine--CoA ligase from Escherichia coli O9:H4 (strain HS).